The following is a 441-amino-acid chain: MKMRSKYAIILFFVVALVIIEKERNIISRVSDKFTLKFPHAESVAPNNTISARSLTKNNSLLANSVAAVWKLLKARRSYSSLQSAASSDVRKVLKGRKHLLLMATTRTGSSFVGEFFNQNNDIFYLFEPLWHVEKTVTFEPGGMNAVASSIIYRDVVQQLMLCDLYTLENFLFPMADRHLTGILFRRGSSKSLCEGEVCTPPKKGGTEKFPCRLRDCGLLNLTLATQACLQKQHVAIKTVPLRQLEFLRPLVEDFRINLKIIQLVRDPRAVLASRMVAFPSKYNAWKKWANEGRVPDDDEVGKIRGNCENLRATAQLGISQPPWLKDRFLLMRYEDIALEPVKRAQEMYRFSGIPMTPEVKKWIYENTQVSKASNNIYSTHKISSEQFEKWRLGLPFKIARVVQQVCEPAMKLFGYKLVKDAATLANRSASLLENRNFWIT.

The Cytoplasmic portion of the chain corresponds to 1 to 4 (MKMR). A helical; Signal-anchor for type II membrane protein membrane pass occupies residues 5–21 (SKYAIILFFVVALVIIE). Topologically, residues 22 to 441 (KERNIISRVS…LLENRNFWIT (420 aa)) are lumenal. N-linked (GlcNAc...) asparagine glycans are attached at residues N47 and N58. 106-112 (TRTGSSF) lines the 3'-phosphoadenylyl sulfate pocket. The N-linked (GlcNAc...) asparagine glycan is linked to N221. 266–274 (RDPRAVLAS) is a 3'-phosphoadenylyl sulfate binding site. N427 carries an N-linked (GlcNAc...) asparagine glycan.

The protein belongs to the sulfotransferase 1 family. Gal/GlcNAc/GalNAc subfamily. Post-translationally, N-glycosylated. As to expression, in electric organ, it is moderately expressed in spinal cord and electric lobe and undetectable in non-neural tissues. Expressed in a punctate distribution in the innervated portion of electrocytes. In the CNS, it is localized within the somas of motor neurons and neurons of the electromotor nucleus.

It is found in the golgi apparatus membrane. The catalysed reaction is chondroitin beta-D-glucuronate + n 3'-phosphoadenylyl sulfate = chondroitin 6'-sulfate + n adenosine 3',5'-bisphosphate + n H(+). It carries out the reaction 3'-phosphoadenylyl sulfate + keratan = adenosine 3',5'-bisphosphate + keratan 6'-sulfate.. Functionally, sulfotransferase that utilizes 3'-phospho-5'-adenylyl sulfate (PAPS) as sulfonate donor to catalyze the transfer of sulfate to position 6 of the N-acetylgalactosamine (GalNAc) residue of chondroitin. Chondroitin sulfate constitutes the predominant proteoglycan present in cartilage and is distributed on the surfaces of many cells and extracellular matrices. Catalyzes with a lower efficiency the sulfation of Gal residues of keratan sulfate, another glycosaminoglycan. Can also catalyze the sulfation of the Gal residues in sialyl N-acetyllactosamine (sialyl LacNAc) oligosaccharides. This chain is Carbohydrate sulfotransferase 3 (CHST3), found in Tetronarce californica (Pacific electric ray).